We begin with the raw amino-acid sequence, 492 residues long: RNA helicase CrhR (492 aa).

The Q motif motif lies at serine 7–threonine 35. The Helicase ATP-binding domain occupies isoleucine 38 to valine 207. An ATP-binding site is contributed by serine 51–threonine 58. The DEAD box signature appears at aspartate 155–aspartate 158. The Helicase C-terminal domain maps to lysine 234–valine 379. A disordered region spans residues valine 451–glutamine 492. The segment covering asparagine 457 to glycine 471 has biased composition (gly residues).

This sequence belongs to the DEAD box helicase family.

The protein resides in the cytoplasm. It is found in the cell inner membrane. The protein localises to the cellular thylakoid membrane. The catalysed reaction is ATP + H2O = ADP + phosphate + H(+). Its activity is regulated as follows. Helicase inhibited by the slowly-hydrolyzing ATP analog ATP-gamma-S. Protein is rapidly degraded upon shifting from 20 to 30 degrees Celsius, the degradation machinery is only transiently present in cells grown at 30 degrees Celsius, is inhibited by commercial protease inhibitors and requires full-length protein expression (the N-terminal fragment does not induce proteolysis although it can be degraded by wild-type extract). Functionally, an ATP-dependent bidirectional RNA helicase with RNA-dependent ATPase activity; does not unwind dsDNA, uses only (d)ATP. Also has ATP-dependent RNA annealing activity; concurrent annealing and helicase activity promote strand-exchange activity. In vitro has low helicase processivity, annealing processivity is probably higher. Required for correct cold adaptation, probably by aiding translation of mRNAs required for photosynthesis and electron transport. Probably regulates the cold-shock-inducible expression of the GroESL chaperones. May partially regulate its own expression at both the transcriptional and post-transcriptional level (experiments used a construct expressing a 25 kDa trunacted protein which might have dominant-negative effects); is probably not directly involved in the pathway responsible for mRNA degradation. The sequence is that of RNA helicase CrhR from Synechocystis sp. (strain ATCC 27184 / PCC 6803 / Kazusa).